A 188-amino-acid polypeptide reads, in one-letter code: Ribosome-recycling factor (188 aa).

This sequence belongs to the RRF family.

It localises to the cytoplasm. Functionally, responsible for the release of ribosomes from messenger RNA at the termination of protein biosynthesis. May increase the efficiency of translation by recycling ribosomes from one round of translation to another. This chain is Ribosome-recycling factor, found in Phenylobacterium zucineum (strain HLK1).